Here is a 578-residue protein sequence, read N- to C-terminus: CTP synthase 2 (578 aa).

Residues 305-564 (KIALVGKYTN…VAAASGTLGE (260 aa)) form the Glutamine amidotransferase type-1 domain. Residues Cys-404, His-537, and Glu-539 each act as for GATase activity in the active site.

Belongs to the CTP synthase family. In terms of assembly, homodimer. Oligomerizes to a tetramer in the presence of its substrates UTP and ATP. Mg(2+) is required as a cofactor.

The protein localises to the cytoplasm. It catalyses the reaction UTP + L-glutamine + ATP + H2O = CTP + L-glutamate + ADP + phosphate + 2 H(+). It participates in pyrimidine metabolism; CTP biosynthesis via de novo pathway; CTP from UDP: step 2/2. Its activity is regulated as follows. Activated by GTP. Subject to allosteric product inhibition by CTP. Inhibited by p-chloromercuriphenylsulfonic acid, N-ethylmaleimide and cyclopentenylcytosine (CPEC). Functionally, catalyzes the ATP-dependent amination of UTP to CTP with either L-glutamine or ammonia as the source of nitrogen. Plays an important role in the regulation of phospholipid synthesis. The sequence is that of CTP synthase 2 (URA8) from Saccharomyces cerevisiae (strain ATCC 204508 / S288c) (Baker's yeast).